A 465-amino-acid chain; its full sequence is Glutamate--tRNA ligase 2 (465 aa).

Residues Pro8–Asn18 carry the 'HIGH' region motif. A 'KMSKS' region motif is present at residues Pro249 to Arg253. Lys252 contacts ATP.

The protein belongs to the class-I aminoacyl-tRNA synthetase family. Glutamate--tRNA ligase type 1 subfamily. As to quaternary structure, monomer.

The protein resides in the cytoplasm. It catalyses the reaction tRNA(Glu) + L-glutamate + ATP = L-glutamyl-tRNA(Glu) + AMP + diphosphate. Catalyzes the attachment of glutamate to tRNA(Glu) in a two-step reaction: glutamate is first activated by ATP to form Glu-AMP and then transferred to the acceptor end of tRNA(Glu). The sequence is that of Glutamate--tRNA ligase 2 from Coxiella burnetii (strain CbuK_Q154) (Coxiella burnetii (strain Q154)).